Reading from the N-terminus, the 496-residue chain is Lysine--tRNA ligase (496 aa).

Glu-409 and Glu-416 together coordinate Mg(2+).

Belongs to the class-II aminoacyl-tRNA synthetase family. Homodimer. Requires Mg(2+) as cofactor.

It localises to the cytoplasm. The enzyme catalyses tRNA(Lys) + L-lysine + ATP = L-lysyl-tRNA(Lys) + AMP + diphosphate. This Streptococcus thermophilus (strain ATCC BAA-491 / LMD-9) protein is Lysine--tRNA ligase.